Here is a 474-residue protein sequence, read N- to C-terminus: Cobyric acid synthase (474 aa).

Residues 251-431 form the GATase cobBQ-type domain; it reads TGFVAIPRLP…LHGLLENSAY (181 aa). Residue C328 is the Nucleophile of the active site. H423 is a catalytic residue.

The protein belongs to the CobB/CobQ family. CobQ subfamily.

It participates in cofactor biosynthesis; adenosylcobalamin biosynthesis. Functionally, catalyzes amidations at positions B, D, E, and G on adenosylcobyrinic A,C-diamide. NH(2) groups are provided by glutamine, and one molecule of ATP is hydrogenolyzed for each amidation. The polypeptide is Cobyric acid synthase (Deinococcus radiodurans (strain ATCC 13939 / DSM 20539 / JCM 16871 / CCUG 27074 / LMG 4051 / NBRC 15346 / NCIMB 9279 / VKM B-1422 / R1)).